The chain runs to 449 residues: Hyaluronidase-1 (449 aa).

The signal sequence occupies residues 1-23; the sequence is MYHLWIKCLAAWIFLKRCNGVHA. Disulfide bonds link cysteine 47/cysteine 340 and cysteine 211/cysteine 227. N-linked (GlcNAc...) asparagine glycosylation is found at asparagine 67, asparagine 103, and asparagine 111. Glutamate 135 serves as the catalytic Proton donor. An N-linked (GlcNAc...) asparagine glycan is attached at asparagine 153. N-linked (GlcNAc...) asparagine glycosylation is present at asparagine 357. 3 cysteine pairs are disulfide-bonded: cysteine 365–cysteine 376, cysteine 370–cysteine 427, and cysteine 429–cysteine 438. Asparagine 401 is a glycosylation site (N-linked (GlcNAc...) asparagine). Residues 427-438 enclose the EGF-like domain; that stretch reads CQCYQGWKGLYC.

This sequence belongs to the glycosyl hydrolase 56 family. In terms of assembly, monomer. As to expression, expressed by the venom gland.

It is found in the secreted. It carries out the reaction Random hydrolysis of (1-&gt;4)-linkages between N-acetyl-beta-D-glucosamine and D-glucuronate residues in hyaluronate.. In terms of biological role, snake venom endo-hyaluronidase that degrades hyaluronan to smaller oligosaccharide fragments. In venom, it is not toxic by itself, but increases the diffusion of other venom proteins by degrading the extracellular matrix. In addition, it displays antiedematogenic activity. The polypeptide is Hyaluronidase-1 (Bitis arietans (African puff adder)).